Consider the following 361-residue polypeptide: Holliday junction branch migration complex subunit RuvB (361 aa).

The segment at 1-25 (MSIHTDDFGQGGFAQGGFPPDKAPD) is disordered. The segment at 5–207 (TDDFGQGGFA…FGIVARLEFY (203 aa)) is large ATPase domain (RuvB-L). Residues L46, R47, G88, K91, T92, T93, 154–156 (EDY), R197, Y207, and R244 each bind ATP. T92 serves as a coordination point for Mg(2+). A small ATPAse domain (RuvB-S) region spans residues 208–278 (TAEELARIVR…LADRALAMLD (71 aa)). The segment at 281 to 361 (PQGFDIMDRK…GLPVPGDDAS (81 aa)) is head domain (RuvB-H). R336 and R341 together coordinate DNA.

Belongs to the RuvB family. In terms of assembly, homohexamer. Forms an RuvA(8)-RuvB(12)-Holliday junction (HJ) complex. HJ DNA is sandwiched between 2 RuvA tetramers; dsDNA enters through RuvA and exits via RuvB. An RuvB hexamer assembles on each DNA strand where it exits the tetramer. Each RuvB hexamer is contacted by two RuvA subunits (via domain III) on 2 adjacent RuvB subunits; this complex drives branch migration. In the full resolvosome a probable DNA-RuvA(4)-RuvB(12)-RuvC(2) complex forms which resolves the HJ.

Its subcellular location is the cytoplasm. It catalyses the reaction ATP + H2O = ADP + phosphate + H(+). Its function is as follows. The RuvA-RuvB-RuvC complex processes Holliday junction (HJ) DNA during genetic recombination and DNA repair, while the RuvA-RuvB complex plays an important role in the rescue of blocked DNA replication forks via replication fork reversal (RFR). RuvA specifically binds to HJ cruciform DNA, conferring on it an open structure. The RuvB hexamer acts as an ATP-dependent pump, pulling dsDNA into and through the RuvAB complex. RuvB forms 2 homohexamers on either side of HJ DNA bound by 1 or 2 RuvA tetramers; 4 subunits per hexamer contact DNA at a time. Coordinated motions by a converter formed by DNA-disengaged RuvB subunits stimulates ATP hydrolysis and nucleotide exchange. Immobilization of the converter enables RuvB to convert the ATP-contained energy into a lever motion, pulling 2 nucleotides of DNA out of the RuvA tetramer per ATP hydrolyzed, thus driving DNA branch migration. The RuvB motors rotate together with the DNA substrate, which together with the progressing nucleotide cycle form the mechanistic basis for DNA recombination by continuous HJ branch migration. Branch migration allows RuvC to scan DNA until it finds its consensus sequence, where it cleaves and resolves cruciform DNA. The protein is Holliday junction branch migration complex subunit RuvB of Delftia acidovorans (strain DSM 14801 / SPH-1).